The sequence spans 405 residues: S-adenosylmethionine synthase (405 aa).

139-144 (GQGSVD) lines the ATP pocket.

The protein belongs to the AdoMet synthase 2 family. Requires Mg(2+) as cofactor.

It catalyses the reaction L-methionine + ATP + H2O = S-adenosyl-L-methionine + phosphate + diphosphate. The protein operates within amino-acid biosynthesis; S-adenosyl-L-methionine biosynthesis; S-adenosyl-L-methionine from L-methionine: step 1/1. Functionally, catalyzes the formation of S-adenosylmethionine from methionine and ATP. In Thermococcus onnurineus (strain NA1), this protein is S-adenosylmethionine synthase.